The primary structure comprises 106 residues: Large ribosomal subunit protein eL30 (106 aa).

Belongs to the eukaryotic ribosomal protein eL30 family.

The polypeptide is Large ribosomal subunit protein eL30 (rpl30e) (Sulfurisphaera tokodaii (strain DSM 16993 / JCM 10545 / NBRC 100140 / 7) (Sulfolobus tokodaii)).